Consider the following 165-residue polypeptide: Nucleotide-binding protein Pro_0479 (165 aa).

It belongs to the YajQ family.

Its function is as follows. Nucleotide-binding protein. The protein is Nucleotide-binding protein Pro_0479 of Prochlorococcus marinus (strain SARG / CCMP1375 / SS120).